Consider the following 190-residue polypeptide: Peptidyl-tRNA hydrolase (190 aa).

F14 is a binding site for tRNA. The active-site Proton acceptor is the H19. TRNA-binding residues include M64, N66, and N112.

This sequence belongs to the PTH family. Monomer.

The protein localises to the cytoplasm. The enzyme catalyses an N-acyl-L-alpha-aminoacyl-tRNA + H2O = an N-acyl-L-amino acid + a tRNA + H(+). Its function is as follows. Hydrolyzes ribosome-free peptidyl-tRNAs (with 1 or more amino acids incorporated), which drop off the ribosome during protein synthesis, or as a result of ribosome stalling. In terms of biological role, catalyzes the release of premature peptidyl moieties from peptidyl-tRNA molecules trapped in stalled 50S ribosomal subunits, and thus maintains levels of free tRNAs and 50S ribosomes. The protein is Peptidyl-tRNA hydrolase of Staphylococcus aureus (strain Mu3 / ATCC 700698).